Reading from the N-terminus, the 376-residue chain is Homocitrate synthase (376 aa).

Positions 4–259 constitute a Pyruvate carboxyltransferase domain; that stretch reads WKIIDSTLRE…RRKYKLEMLP (256 aa). 2-oxoglutarate is bound at residue Arg-12. Residue Glu-13 coordinates Mg(2+). Residue His-72 participates in 2-oxoglutarate binding. Asp-92 contributes to the L-lysine binding site. Residue Arg-133 coordinates 2-oxoglutarate. The L-lysine site is built by Ser-135 and Thr-166. Thr-166 contacts 2-oxoglutarate. Mg(2+) contacts are provided by His-195 and His-197. His-292 functions as the Proton acceptor in the catalytic mechanism.

It belongs to the alpha-IPM synthase/homocitrate synthase family. Homocitrate synthase LYS20/LYS21 subfamily. As to quaternary structure, exists in an equilibrium between monomer and homodimer. The cofactor is Mg(2+). Requires Mn(2+) as cofactor.

The protein localises to the cytoplasm. The catalysed reaction is acetyl-CoA + 2-oxoglutarate + H2O = (2R)-homocitrate + CoA + H(+). It carries out the reaction oxaloacetate + acetyl-CoA + H2O = citrate + CoA + H(+). It functions in the pathway amino-acid biosynthesis; L-lysine biosynthesis via AAA pathway; L-alpha-aminoadipate from 2-oxoglutarate: step 1/5. Its activity is regulated as follows. Is highly and competitively inhibited by lysine that binds to the active site and competes with 2-oxoglutarate. Is also slightly inhibited by arginine and 2-aminoethylcysteine. Functionally, catalyzes the aldol-type condensation of 2-oxoglutarate with acetyl-CoA to yield homocitrate. Carries out the first step of the alpha-aminoadipate (AAA) lysine biosynthesis pathway. To a lesser extent, can also use oxaloacetate in place of 2-oxoglutarate, leading to citrate. Does not display 2-isopropylmalate synthase activity since it cannot use 2-oxoisovalerate. The polypeptide is Homocitrate synthase (Thermus thermophilus (strain ATCC BAA-163 / DSM 7039 / HB27)).